Here is a 95-residue protein sequence, read N- to C-terminus: MEENIINLIDENGVESQFEIILTLEAEGKEYAILMPLDDEEAEEALIFRIDEDEEGEILIPLESDEEYETVVAVYTAIMEEEGLNYDEDESNGLN.

It belongs to the UPF0473 family.

This Clostridioides difficile (strain 630) (Peptoclostridium difficile) protein is UPF0473 protein CD630_12860.